Reading from the N-terminus, the 247-residue chain is EGF-like domain-containing protein C02B10.3 (247 aa).

A signal peptide spans 1–17 (MTGALCIVLFGVTMVTA). Residues 18–220 (ERPKIKDTHG…LCDKRCQKGH (203 aa)) are Extracellular-facing. 2 consecutive EGF-like domains span residues 114 to 150 (FGTS…RFCE) and 180 to 213 (SGAS…DLCD). 4 cysteine pairs are disulfide-bonded: C123-C138, C140-C149, C190-C201, and C203-C212. N-linked (GlcNAc...) asparagine glycosylation is present at N126. A helical membrane pass occupies residues 221 to 240 (VTCSTCSSFIPAALFAIILL). Over 241-247 (CVNKFNY) the chain is Cytoplasmic.

Its subcellular location is the membrane. The protein is EGF-like domain-containing protein C02B10.3 of Caenorhabditis elegans.